Consider the following 147-residue polypeptide: Large ribosomal subunit protein bL9 (147 aa).

It belongs to the bacterial ribosomal protein bL9 family.

Its function is as follows. Binds to the 23S rRNA. The protein is Large ribosomal subunit protein bL9 of Caldanaerobacter subterraneus subsp. tengcongensis (strain DSM 15242 / JCM 11007 / NBRC 100824 / MB4) (Thermoanaerobacter tengcongensis).